A 1171-amino-acid chain; its full sequence is MSMVYLASGDSNANIEYQTISSTATQQLTQEQSERLHDRITKAQLQKLYDLFKSSPDQMVGYSELRHMLEDVDITFTDYTYTRLFLKINQNSDFMIDWNEFVSYLIFGFQEEDPSSQKEALTMPISAPPVVRKTEHRSAVCCITLLKVKSDQTPMEEIPELSANYSFGGEDSPENSGMWVTASREGQLRFWSAHMEPLRSAVSESSNLPYAVYCMSYAFYNNGKTHSKLVLGDYAGNVRILSYSPYLRGPFQAKPGAALVELVWADVLKGRIPLLIPREHINLHSELISCVYYSLHMNTLFASAEYRNTKKYRGRCPGLIMVSNDDRNNFRIPLGVSVFYVAESKNILVTGGPDTFVRIWDVYISSEPSAILTGHNGGIVAVFVQPEENKVYSVDYHKVIKVWDLQEHTLLQTFGELVRIIHHSETDIKYYYHSHLRDLLVAGRKLIQIKCCPRVRVDLTDGNTHAAPVSVVLYNRLFRNIVTCGLDSYIIVWDPWTGRRKIIMKNCHTKMIYGEIIDIEITAACFDPLEQFLLTGARDGSLKIWNYNNAVVVRNMSIQPDQEVTAVIWVIDRILAMGWDRQVTEFNDVAGREYGDPKKWAKFHTDDITCADVKLGEGVVTATYSGEIIFWKLETGQPYRRYNVMNPYQFIELKLNTEEEKLTRRSKRISSLMGAGRRTLVLQNFKPDEIKDYGANIPVSVQAVLFLQKRPMTKDHGSVFISLDTGYIQVYSHHQHGGFIKQFFAVHKVGDCVLTMASDRKNRFLYTGTAFGYIKIWHIVNYCIPQAEKTEVCMPRLRLDFIFLRKDLFLTRAKRVIRNQPEPMLVSSYKGHLKAINSIGFINLPKILFTGSHDYSCRLWTQGGRYLGTLGTVLPWSKLTPFERAGEDNRAYRLPPDIKKVASSTTLKVISGIQHTGTVKRAKAVDEREDERDVEEAASDVKNMFDRPLREPILGHHFQLPGRSVIEQRIDLDTTELCIPVYTHLRVYPSEMMEHLPTPPVIGQVRAENYLDHYMPVVGKVDPHDSAINIREPQKRAKAGSSSLLPARAGYSLGKPKTNSVLGMPRSSGAGLCKPRTSFTLSDYTPGNPKADFSSRNMKSNLSSGSPKAGIPKADSSHGSAKASCRLGSPKPDYISIKKRASFSPGTTPKTDFSPKAGKPKTNTMKSSNSH.

8 WD repeats span residues 157-201 (EIPE…LRSA), 331-370 (RIPLGVSVFYVAESKNILVTGGPDTFVRIWDVYISSEPSA), 374-413 (GHNGGIVAVFVQPEENKVYSVDYHKVIKVWDLQEHTLLQT), 464-503 (THAAPVSVVLYNRLFRNIVTCGLDSYIIVWDPWTGRRKII), 516-555 (IIDIEITAACFDPLEQFLLTGARDGSLKIWNYNNAVVVRN), 603-643 (FHTD…RRYN), 748-787 (KVGDCVLTMASDRKNRFLYTGTAFGYIKIWHIVNYCIPQA), and 831-870 (GHLKAINSIGFINLPKILFTGSHDYSCRLWTQGGRYLGTL). The interval 1076–1171 (RTSFTLSDYT…TNTMKSSNSH (96 aa)) is disordered. Composition is skewed to polar residues over residues 1094–1106 (SSRNMKSNLSSGS) and 1161–1171 (KTNTMKSSNSH).

The polypeptide is WD repeat-containing protein on Y chromosome (Drosophila grimshawi (Hawaiian fruit fly)).